An 80-amino-acid chain; its full sequence is FXYD domain-containing ion transport regulator 7 (80 aa).

The Extracellular segment spans residues 1-23 (MATPTQTPTKAPEEPDPFYYDYN). O-linked (GlcNAc) threonine glycans are attached at residues Thr-3, Thr-5, and Thr-9. Residues 24–46 (TVQTVGMTLATILFLLGILIVIS) form a helical membrane-spanning segment. Over 47 to 80 (KKVKCRKADSRSESPTCKSCKSELPSSAPGGGGV) the chain is Cytoplasmic. A disordered region spans residues 54 to 80 (ADSRSESPTCKSCKSELPSSAPGGGGV). Position 73 is a phosphoserine (Ser-73).

It belongs to the FXYD family. Regulatory subunit of the sodium/potassium-transporting ATPase which is composed of a catalytic alpha subunit, a non-catalytic beta subunit and a FXYD regulatory unit that modulates the enzymatic activity in a tissue- and isoform-specific way by changing affinities of the Na+/K+-ATPase toward Na(+), K(+) or ATP. In terms of processing, O-glycosylated; required for stabilization and translocation to the plasma membrane.

It is found in the cell membrane. Functionally, associates with and regulates the activity of the sodium/potassium-transporting ATPase (NKA) which catalyzes the hydrolysis of ATP coupled with the exchange of Na(+) and K(+) ions across the plasma membrane. Reduces the apparent affinity for external K(+), an effect that depends on the presence of external Na(+) and voltage. Increases the apparent affinity for intracellular Na(+). This is FXYD domain-containing ion transport regulator 7 (FXYD7) from Homo sapiens (Human).